The following is a 433-amino-acid chain: Glucoside xylosyltransferase 1 (433 aa).

The Cytoplasmic segment spans residues 1–6; that stretch reads MRRFAR. A helical; Signal-anchor for type II membrane protein transmembrane segment spans residues 7-29; the sequence is VALLFLGCGVCSLLYGVSQLALS. Topologically, residues 30 to 433 are lumenal; sequence LEQEAGGARQ…DLSVRRSKGS (404 aa). The segment at 39–64 is disordered; sequence QRQARESAAPGGGRQAGSADGGEEGA. Residues Asn69, Asn166, Asn271, Asn305, and Asn380 are each glycosylated (N-linked (GlcNAc...) asparagine).

Belongs to the glycosyltransferase 8 family.

It is found in the membrane. It catalyses the reaction 3-O-(beta-D-glucosyl)-L-seryl-[EGF-like domain protein] + UDP-alpha-D-xylose = 3-O-[alpha-D-xylosyl-(1-&gt;3)-beta-D-glucosyl]-L-seryl-[EGF-like domain protein] + UDP + H(+). In terms of biological role, glycosyltransferase which elongates the O-linked glucose attached to EGF-like repeats in the extracellular domain of Notch proteins by catalyzing the addition of xylose. This Gallus gallus (Chicken) protein is Glucoside xylosyltransferase 1 (GXYLT1).